We begin with the raw amino-acid sequence, 643 residues long: Phosphomethylpyrimidine synthase (643 aa).

Residues Asn-248, Met-277, Tyr-306, His-342, 362 to 364 (SRG), 403 to 406 (DGLR), and Glu-442 each bind substrate. His-446 lines the Zn(2+) pocket. Residue Tyr-469 coordinates substrate. His-510 contacts Zn(2+). The [4Fe-4S] cluster site is built by Cys-590, Cys-593, and Cys-598.

This sequence belongs to the ThiC family. In terms of assembly, homodimer. The cofactor is [4Fe-4S] cluster.

The enzyme catalyses 5-amino-1-(5-phospho-beta-D-ribosyl)imidazole + S-adenosyl-L-methionine = 4-amino-2-methyl-5-(phosphooxymethyl)pyrimidine + CO + 5'-deoxyadenosine + formate + L-methionine + 3 H(+). Its pathway is cofactor biosynthesis; thiamine diphosphate biosynthesis. Functionally, catalyzes the synthesis of the hydroxymethylpyrimidine phosphate (HMP-P) moiety of thiamine from aminoimidazole ribotide (AIR) in a radical S-adenosyl-L-methionine (SAM)-dependent reaction. In Burkholderia cenocepacia (strain ATCC BAA-245 / DSM 16553 / LMG 16656 / NCTC 13227 / J2315 / CF5610) (Burkholderia cepacia (strain J2315)), this protein is Phosphomethylpyrimidine synthase.